Reading from the N-terminus, the 70-residue chain is Cold shock-like protein CspH (70 aa).

In terms of domain architecture, CSD spans 7–67 (GIVKTFDRKS…GLRGPTAANV (61 aa)).

The protein localises to the cytoplasm. This is Cold shock-like protein CspH (cspH) from Escherichia coli O6:H1 (strain CFT073 / ATCC 700928 / UPEC).